The following is a 204-amino-acid chain: Holliday junction branch migration complex subunit RuvA (204 aa).

The segment at 1-63 is domain I; the sequence is MIASLRGTVI…EDAMKLYGFI (63 aa). The segment at 64–142 is domain II; the sequence is DDQSREMFAL…AYTVGVVDDG (79 aa). A flexible linker region spans residues 143-151; that stretch reads APTAPTQGV. Residues 152 to 204 are domain III; that stretch reads APVVVVDQVTQALTGLGFTEKQADDAVAAVLSADPGLDTSAALRAALAKLGGK.

This sequence belongs to the RuvA family. As to quaternary structure, homotetramer. Forms an RuvA(8)-RuvB(12)-Holliday junction (HJ) complex. HJ DNA is sandwiched between 2 RuvA tetramers; dsDNA enters through RuvA and exits via RuvB. An RuvB hexamer assembles on each DNA strand where it exits the tetramer. Each RuvB hexamer is contacted by two RuvA subunits (via domain III) on 2 adjacent RuvB subunits; this complex drives branch migration. In the full resolvosome a probable DNA-RuvA(4)-RuvB(12)-RuvC(2) complex forms which resolves the HJ.

It localises to the cytoplasm. The RuvA-RuvB-RuvC complex processes Holliday junction (HJ) DNA during genetic recombination and DNA repair, while the RuvA-RuvB complex plays an important role in the rescue of blocked DNA replication forks via replication fork reversal (RFR). RuvA specifically binds to HJ cruciform DNA, conferring on it an open structure. The RuvB hexamer acts as an ATP-dependent pump, pulling dsDNA into and through the RuvAB complex. HJ branch migration allows RuvC to scan DNA until it finds its consensus sequence, where it cleaves and resolves the cruciform DNA. The chain is Holliday junction branch migration complex subunit RuvA from Corynebacterium efficiens (strain DSM 44549 / YS-314 / AJ 12310 / JCM 11189 / NBRC 100395).